Consider the following 246-residue polypeptide: Protein phosphatase PhpP (246 aa).

Positions 2-240 (EISLLTDVGQ…DNITVALVSM (239 aa)) constitute a PPM-type phosphatase domain. Mn(2+) contacts are provided by D36, G37, D192, and D231.

It belongs to the PP2C family. Requires Mn(2+) as cofactor.

It is found in the cytoplasm. It catalyses the reaction O-phospho-L-seryl-[protein] + H2O = L-seryl-[protein] + phosphate. It carries out the reaction O-phospho-L-threonyl-[protein] + H2O = L-threonyl-[protein] + phosphate. Functionally, protein phosphatase able to dephosphorylate StkP-P and other phosphorylated protein substrates. PhpP and its cognate protein kinase StkP appear to constitute a functional signaling couple in vivo, PhpP's primary role being probably to control phosphorylation levels of StkP and of its targets. PhpP thus performs an essential control of StkP activity. Also dephosphorylates DivIVA in vivo. The sequence is that of Protein phosphatase PhpP (phpP) from Streptococcus pneumoniae serotype 2 (strain D39 / NCTC 7466).